The primary structure comprises 176 residues: Probable fimbrial subunit LpfE (176 aa).

A signal peptide spans 1–23 (MKFKRLLHSGIASLSLVACGVNA).

It belongs to the fimbrial protein family.

The protein localises to the fimbrium. Its function is as follows. Part of the lpfABCC'DE fimbrial operon. LP fimbriae may participate in the interaction with eukaryotic cells by assisting in microcolony formation. The protein is Probable fimbrial subunit LpfE (lpfE) of Escherichia coli O157:H7.